A 150-amino-acid chain; its full sequence is Large ribosomal subunit protein uL13 (150 aa).

The protein belongs to the universal ribosomal protein uL13 family. In terms of assembly, part of the 50S ribosomal subunit.

Its function is as follows. This protein is one of the early assembly proteins of the 50S ribosomal subunit, although it is not seen to bind rRNA by itself. It is important during the early stages of 50S assembly. This is Large ribosomal subunit protein uL13 from Chlorobaculum parvum (strain DSM 263 / NCIMB 8327) (Chlorobium vibrioforme subsp. thiosulfatophilum).